The sequence spans 518 residues: uncharacterized protein (518 aa).

14 helical membrane-spanning segments follow: residues 13-33 (WAISLFTIGVFMAALDNGIIS), 49-69 (WGSWGITLYTLGLSVSVPIVG), 86-106 (CLFGLGSLLVALSQSFPLFLI), 109-129 (LIQALGGGGIFIIGSSHILAT), 141-161 (LLGAMNGMAAVLGPNIGSFLL), 169-189 (WLFLINLPIAVLLVVFGACFI), 202-222 (AAGIFLLSLSILAVMYGMTNL), 231-251 (LGNPEVYGCIIFGILCFAALI), 280-300 (LIIGLLSGGLLAAVIFIPSYV), 312-332 (GYWMTPLALASGIGAWLGGAL), 341-361 (TVILSGIISCAGFALFPLWVT), 365-385 (EFVIASVAAGIGFGFLLGAPL), 410-430 (IGLTLAPTLYAGFITAGFDQI), and 493-513 (LYAAAAVVSLLVIAAISIPAF).

This sequence belongs to the major facilitator superfamily. TCR/Tet family.

Its subcellular location is the cell membrane. This is an uncharacterized protein from Bacillus subtilis (strain 168).